Here is a 210-residue protein sequence, read N- to C-terminus: NAD(P)H-hydrate epimerase (210 aa).

A YjeF N-terminal domain is found at 11-210; sequence AHNFDDYTIN…TVADIGIYEP (200 aa). 60–64 contributes to the (6S)-NADPHX binding site; it reads NNGGD. Residues Asn61 and Asp123 each contribute to the K(+) site. (6S)-NADPHX-binding positions include 127–133 and Asp156; that span reads GVGLSRD. Thr159 contributes to the K(+) binding site.

Belongs to the NnrE/AIBP family. The cofactor is K(+).

It carries out the reaction (6R)-NADHX = (6S)-NADHX. The catalysed reaction is (6R)-NADPHX = (6S)-NADPHX. Its function is as follows. Catalyzes the epimerization of the S- and R-forms of NAD(P)HX, a damaged form of NAD(P)H that is a result of enzymatic or heat-dependent hydration. This is a prerequisite for the S-specific NAD(P)H-hydrate dehydratase to allow the repair of both epimers of NAD(P)HX. The chain is NAD(P)H-hydrate epimerase from Oenococcus oeni (strain ATCC BAA-331 / PSU-1).